The primary structure comprises 373 residues: Zinc finger protein CONSTANS-LIKE 10 (373 aa).

Cys5, Cys8, Cys28, His33, Cys48, Cys51, Cys71, and His76 together coordinate Zn(2+). A B box-type 1; atypical zinc finger spans residues 5–47; sequence CDFCGEQRSMVYCRSDAACLCLSCDRNVHSANALSKRHSRTLV. A B box-type 2; atypical zinc finger spans residues 48–92; that stretch reads CERCNAQPASVRCSDERVSLCQNCDWSGHDGKNSTTTSHHKRQTI. The interval 152–172 is disordered; that stretch reads PETSSAAQGMDHSSVPENSSM. In terms of domain architecture, CCT spans 316 to 358; that stretch reads RNNAVMRYKEKKKARKFDKRVRYVSRKERADVRRRVKGRFVKS.

Belongs to the CONSTANS family.

It is found in the nucleus. This chain is Zinc finger protein CONSTANS-LIKE 10 (COL10), found in Arabidopsis thaliana (Mouse-ear cress).